We begin with the raw amino-acid sequence, 72 residues long: Small ribosomal subunit protein bS20 (72 aa).

Belongs to the bacterial ribosomal protein bS20 family.

Binds directly to 16S ribosomal RNA. The protein is Small ribosomal subunit protein bS20 (rpsT) of Klebsiella pneumoniae.